Consider the following 264-residue polypeptide: Thymidylate synthase (264 aa).

Arginine 21 contacts dUMP. Histidine 51 lines the (6R)-5,10-methylene-5,6,7,8-tetrahydrofolate pocket. Arginine 126–arginine 127 serves as a coordination point for dUMP. The Nucleophile role is filled by cysteine 146. DUMP-binding positions include arginine 166–aspartate 169, asparagine 177, and histidine 207–tyrosine 209. A (6R)-5,10-methylene-5,6,7,8-tetrahydrofolate-binding site is contributed by aspartate 169. Alanine 263 contributes to the (6R)-5,10-methylene-5,6,7,8-tetrahydrofolate binding site.

This sequence belongs to the thymidylate synthase family. Bacterial-type ThyA subfamily. Homodimer.

The protein resides in the cytoplasm. It catalyses the reaction dUMP + (6R)-5,10-methylene-5,6,7,8-tetrahydrofolate = 7,8-dihydrofolate + dTMP. It functions in the pathway pyrimidine metabolism; dTTP biosynthesis. In terms of biological role, catalyzes the reductive methylation of 2'-deoxyuridine-5'-monophosphate (dUMP) to 2'-deoxythymidine-5'-monophosphate (dTMP) while utilizing 5,10-methylenetetrahydrofolate (mTHF) as the methyl donor and reductant in the reaction, yielding dihydrofolate (DHF) as a by-product. This enzymatic reaction provides an intracellular de novo source of dTMP, an essential precursor for DNA biosynthesis. The sequence is that of Thymidylate synthase from Serratia proteamaculans (strain 568).